The primary structure comprises 91 residues: Putative pterin-4-alpha-carbinolamine dehydratase (91 aa).

Belongs to the pterin-4-alpha-carbinolamine dehydratase family.

The enzyme catalyses (4aS,6R)-4a-hydroxy-L-erythro-5,6,7,8-tetrahydrobiopterin = (6R)-L-erythro-6,7-dihydrobiopterin + H2O. This chain is Putative pterin-4-alpha-carbinolamine dehydratase, found in Sulfolobus acidocaldarius (strain ATCC 33909 / DSM 639 / JCM 8929 / NBRC 15157 / NCIMB 11770).